Reading from the N-terminus, the 141-residue chain is ATP synthase epsilon chain (141 aa).

Belongs to the ATPase epsilon chain family. F-type ATPases have 2 components, CF(1) - the catalytic core - and CF(0) - the membrane proton channel. CF(1) has five subunits: alpha(3), beta(3), gamma(1), delta(1), epsilon(1). CF(0) has three main subunits: a, b and c.

The protein resides in the cell inner membrane. Produces ATP from ADP in the presence of a proton gradient across the membrane. This chain is ATP synthase epsilon chain, found in Aromatoleum aromaticum (strain DSM 19018 / LMG 30748 / EbN1) (Azoarcus sp. (strain EbN1)).